Reading from the N-terminus, the 47-residue chain is Delta-stichotoxin-Hcr3a (47 aa).

The residue at position 3 (proline 3) is a Hydroxyproline. 3 disulfides stabilise this stretch: cysteine 4/cysteine 44, cysteine 6/cysteine 34, and cysteine 27/cysteine 45.

Belongs to the sea anemone sodium channel inhibitory toxin family. Type I subfamily.

It localises to the secreted. The protein resides in the nematocyst. Its function is as follows. Inhibits voltage-gated sodium channels (Nav). The chain is Delta-stichotoxin-Hcr3a from Radianthus crispa (Leathery sea anemone).